The following is a 603-amino-acid chain: Geraniol synthase, chloroplastic (603 aa).

Residues 1–35 (MSSISQKVVIGLNKAAANNNLQNLDRRGFKTRCVS) constitute a chloroplast transit peptide. (2E)-geranyl diphosphate contacts are provided by Arg-319, Asp-356, Asp-360, Arg-497, and Asp-500. The Mg(2+) site is built by Asp-356 and Asp-360. Residues 356 to 360 (DDVYD) carry the DDXXD motif motif. Mg(2+)-binding residues include Asp-500, Thr-504, and Glu-508.

This sequence belongs to the terpene synthase family. Tpsb subfamily. As to quaternary structure, monomer. It depends on Mg(2+) as a cofactor. Mn(2+) is required as a cofactor.

The protein localises to the plastid. Its subcellular location is the chloroplast. The enzyme catalyses (2E)-geranyl diphosphate + H2O = (2E)-geraniol + diphosphate. It participates in secondary metabolite biosynthesis; terpenoid biosynthesis. Its function is as follows. Monoterpene synthase (mono-TPS) involved in the biosynthesis of monoterpenes natural products. Catalyzes the conversion of (2E)-geranyl diphosphate (GPP) into geraniol. In Perilla frutescens var. hirtella (Perilla citriodora), this protein is Geraniol synthase, chloroplastic.